We begin with the raw amino-acid sequence, 268 residues long: MEFAHLTVLSLFCLAFVGITATSSGEDYWQSIWPNTPLPKTFSDLLIPSGITNSLPIKSEELKQYSTLFFEHDLHPGKNFNLGHTNSVGSIIRPFTKSRQGVTDSIWLANKEKQSLEDFCYSPTAIAEHKHCVSSLKSMIDQVISHFGSTKIKAISSNFAPYQDQYVVEDVKKVGDNAVMCHRLNFEKVVFNCHQVRDTTAYVVSLVASDGTKTKALTVCHHDTRGMNPELLYEALEVTPGTVPVCHFIGNKAAAWVPNHTADNLCVM.

Positions methionine 1 to glycine 25 are cleaved as a signal peptide. The region spanning leucine 68–asparagine 259 is the BURP domain.

As to expression, expressed in seeds. Detected only in the embryo. In germinating seedlings, detected in roots, root caps, root hairs, vascular bundle, mesophyll cells and epidermal cells of the cotyledons and the hypocotyl.

It is found in the golgi apparatus. It localises to the golgi stack. The protein localises to the prevacuolar compartment. Associated with the protein storage vacuole formation. The polypeptide is Unknown seed protein USP (Vicia faba (Broad bean)).